The following is a 689-amino-acid chain: Elongation factor G (689 aa).

The tr-type G domain occupies 8–282 (LNTRNIGIMA…AVVDYLPSPI (275 aa)). GTP contacts are provided by residues 17 to 24 (AHIDAGKT), 81 to 85 (DTPGH), and 135 to 138 (NKMD).

Belongs to the TRAFAC class translation factor GTPase superfamily. Classic translation factor GTPase family. EF-G/EF-2 subfamily.

The protein localises to the cytoplasm. Its function is as follows. Catalyzes the GTP-dependent ribosomal translocation step during translation elongation. During this step, the ribosome changes from the pre-translocational (PRE) to the post-translocational (POST) state as the newly formed A-site-bound peptidyl-tRNA and P-site-bound deacylated tRNA move to the P and E sites, respectively. Catalyzes the coordinated movement of the two tRNA molecules, the mRNA and conformational changes in the ribosome. This Mycoplasma capricolum subsp. capricolum (strain California kid / ATCC 27343 / NCTC 10154) protein is Elongation factor G.